Reading from the N-terminus, the 1193-residue chain is DNA polymerase (1193 aa).

The interval 1 to 88 is disordered; the sequence is MALVQTHGSR…PAKKKRGTVV (88 aa). The span at 48 to 68 shows a compositional bias: low complexity; that stretch reads PATTASGSRAAPTARRASSPP.

This sequence belongs to the DNA polymerase type-B family. Heterodimer with the terminal protein; this heterodimer binds to bp 9 to 18 of the genome. Forms a complex with viral pTP, DBP and hosts NFIA and POU2F1/OCT1 for initiation of replication.

It localises to the host nucleus. It carries out the reaction DNA(n) + a 2'-deoxyribonucleoside 5'-triphosphate = DNA(n+1) + diphosphate. In terms of biological role, eukaryotic-type DNA polymerase involved in viral genomic replication. DNA synthesis is protein primed, and acts in a strand displacement replication. Assembles in complex with viral pTP, DBP, host NFIA and host POU2F1/OCT1 on viral origin of replication. The polymerase covalently transfers dCMP onto pTP, thereby initiating complementary strand synthesis. This is DNA polymerase from Homo sapiens (Human).